Here is a 1225-residue protein sequence, read N- to C-terminus: ABC transporter B family member 18 (1225 aa).

6 consecutive transmembrane segments (helical) span residues 23-43, 70-90, 146-168, 172-194, 252-272, and 284-304; these read MALG…IFFI, VALV…GYCW, LPNF…LLLW, IVGF…ALIR, GIAI…TWYG, and GTVS…GQSL. The 290-residue stretch at 23–312 folds into the ABC transmembrane type-1 1 domain; sequence MALGLIGAVG…SLSNLKYFSE (290 aa). The 237-residue stretch at 347 to 583 folds into the ABC transporter 1 domain; it reads VEFNHVKFTY…LDGQYTSLVR (237 aa). Position 382-389 (382-389) interacts with ATP; that stretch reads GGSGSGKS. Asn530 carries N-linked (GlcNAc...) asparagine glycosylation. 2 helical membrane passes run 657-677 and 699-719; these read ALYG…YSYS and IYVL…ISQH. The region spanning 657–945 is the ABC transmembrane type-1 2 domain; the sequence is ALYGCLGAAL…AGTMTKDLVK (289 aa). N-linked (GlcNAc...) asparagine glycosylation is present at Asn754. Transmembrane regions (helical) follow at residues 780–800, 804–824, 880–900, and 919–939; these read LLVQ…VISW, IVMM…RVLL, SWLA…VSAL, and FLEI…AGTM. 2 N-linked (GlcNAc...) asparagine glycosylation sites follow: Asn960 and Asn1000. The ABC transporter 2 domain maps to 980-1218; the sequence is ISFSNVDFAY…GPKGAYFSLV (239 aa). Position 1015–1022 (1015–1022) interacts with ATP; it reads GPSGSGKS. An N-linked (GlcNAc...) asparagine glycan is attached at Asn1201.

The protein belongs to the ABC transporter superfamily. ABCB family. Multidrug resistance exporter (TC 3.A.1.201) subfamily.

It localises to the membrane. The protein is ABC transporter B family member 18 (ABCB18) of Arabidopsis thaliana (Mouse-ear cress).